An 81-amino-acid polypeptide reads, in one-letter code: Cytochrome b559 subunit alpha (81 aa).

The helical transmembrane segment at 21 to 35 (VIHALTIPALFLAGW) threads the bilayer. Histidine 23 lines the heme pocket.

Belongs to the PsbE/PsbF family. Heterodimer of an alpha subunit and a beta subunit. PSII is composed of 1 copy each of membrane proteins PsbA, PsbB, PsbC, PsbD, PsbE, PsbF, PsbH, PsbI, PsbJ, PsbK, PsbL, PsbM, PsbT, PsbX, PsbY, PsbZ, Psb30/Ycf12, peripheral proteins PsbO, CyanoQ (PsbQ), PsbU, PsbV and a large number of cofactors. It forms dimeric complexes. Heme b serves as cofactor.

The protein resides in the cellular thylakoid membrane. This b-type cytochrome is tightly associated with the reaction center of photosystem II (PSII). PSII is a light-driven water:plastoquinone oxidoreductase that uses light energy to abstract electrons from H(2)O, generating O(2) and a proton gradient subsequently used for ATP formation. It consists of a core antenna complex that captures photons, and an electron transfer chain that converts photonic excitation into a charge separation. This is Cytochrome b559 subunit alpha from Synechococcus sp. (strain JA-3-3Ab) (Cyanobacteria bacterium Yellowstone A-Prime).